Here is a 200-residue protein sequence, read N- to C-terminus: NAD(P)H dehydrogenase (quinone) (200 aa).

The Flavodoxin-like domain maps to 4-191 (VLVLYYSSYG…DIARYQGKHV (188 aa)). Residues 10-15 (SSYGHV) and 79-81 (TRF) contribute to the FMN site. Tyr12 contributes to the NAD(+) binding site. Trp99 contributes to the substrate binding site. Residues 114-120 (STGTQHG) and His135 contribute to the FMN site.

This sequence belongs to the WrbA family. FMN serves as cofactor.

It catalyses the reaction a quinone + NADH + H(+) = a quinol + NAD(+). It carries out the reaction a quinone + NADPH + H(+) = a quinol + NADP(+). The protein is NAD(P)H dehydrogenase (quinone) of Burkholderia multivorans (strain ATCC 17616 / 249).